A 240-amino-acid polypeptide reads, in one-letter code: Phosphatidylserine decarboxylase proenzyme (240 aa).

The active-site Schiff-base intermediate with substrate; via pyruvic acid is the S205. S205 carries the pyruvic acid (Ser); by autocatalysis modification.

Belongs to the phosphatidylserine decarboxylase family. PSD-A subfamily. Heterodimer of a large membrane-associated beta subunit and a small pyruvoyl-containing alpha subunit. It depends on pyruvate as a cofactor. Is synthesized initially as an inactive proenzyme. Formation of the active enzyme involves a self-maturation process in which the active site pyruvoyl group is generated from an internal serine residue via an autocatalytic post-translational modification. Two non-identical subunits are generated from the proenzyme in this reaction, and the pyruvate is formed at the N-terminus of the alpha chain, which is derived from the carboxyl end of the proenzyme. The post-translation cleavage follows an unusual pathway, termed non-hydrolytic serinolysis, in which the side chain hydroxyl group of the serine supplies its oxygen atom to form the C-terminus of the beta chain, while the remainder of the serine residue undergoes an oxidative deamination to produce ammonia and the pyruvoyl prosthetic group on the alpha chain.

The protein localises to the cell membrane. The enzyme catalyses a 1,2-diacyl-sn-glycero-3-phospho-L-serine + H(+) = a 1,2-diacyl-sn-glycero-3-phosphoethanolamine + CO2. Its pathway is phospholipid metabolism; phosphatidylethanolamine biosynthesis; phosphatidylethanolamine from CDP-diacylglycerol: step 2/2. In terms of biological role, catalyzes the formation of phosphatidylethanolamine (PtdEtn) from phosphatidylserine (PtdSer). The sequence is that of Phosphatidylserine decarboxylase proenzyme from Rhodopirellula baltica (strain DSM 10527 / NCIMB 13988 / SH1).